The primary structure comprises 301 residues: uncharacterized protein (301 aa).

This is an uncharacterized protein from Escherichia coli (strain K12).